We begin with the raw amino-acid sequence, 301 residues long: N-acetylmuramic acid 6-phosphate etherase (301 aa).

One can recognise an SIS domain in the interval 57 to 220 (VVERLRAGGR…STISMVRLGK (164 aa)). The active-site Proton donor is Glu-85. Glu-116 is an active-site residue.

This sequence belongs to the GCKR-like family. MurNAc-6-P etherase subfamily. Homodimer.

The catalysed reaction is N-acetyl-D-muramate 6-phosphate + H2O = N-acetyl-D-glucosamine 6-phosphate + (R)-lactate. Its pathway is amino-sugar metabolism; N-acetylmuramate degradation. In terms of biological role, specifically catalyzes the cleavage of the D-lactyl ether substituent of MurNAc 6-phosphate, producing GlcNAc 6-phosphate and D-lactate. This Rubrobacter xylanophilus (strain DSM 9941 / JCM 11954 / NBRC 16129 / PRD-1) protein is N-acetylmuramic acid 6-phosphate etherase.